The sequence spans 368 residues: Histidinol-phosphate aminotransferase 1 (368 aa).

Lysine 224 is modified (N6-(pyridoxal phosphate)lysine).

It belongs to the class-II pyridoxal-phosphate-dependent aminotransferase family. Histidinol-phosphate aminotransferase subfamily. In terms of assembly, homodimer. Requires pyridoxal 5'-phosphate as cofactor.

It catalyses the reaction L-histidinol phosphate + 2-oxoglutarate = 3-(imidazol-4-yl)-2-oxopropyl phosphate + L-glutamate. Its pathway is amino-acid biosynthesis; L-histidine biosynthesis; L-histidine from 5-phospho-alpha-D-ribose 1-diphosphate: step 7/9. This chain is Histidinol-phosphate aminotransferase 1 (hisC1), found in Rhizobium meliloti (strain 1021) (Ensifer meliloti).